The primary structure comprises 319 residues: L-lactate dehydrogenase (319 aa).

Residues V11, D32, R37, Y62, and 76–77 each bind NAD(+); that span reads GV. Substrate-binding positions include Q79, R85, and 117–120; that span reads NPVD. Residues 115–117 and S140 contribute to the NAD(+) site; that span reads VTN. Position 145–148 (145–148) interacts with substrate; that stretch reads DTAR. Positions 150 and 165 each coordinate beta-D-fructose 1,6-bisphosphate. The Proton acceptor role is filled by H172. Y217 bears the Phosphotyrosine mark. Substrate is bound at residue T226.

It belongs to the LDH/MDH superfamily. LDH family. In terms of assembly, homotetramer.

It localises to the cytoplasm. It catalyses the reaction (S)-lactate + NAD(+) = pyruvate + NADH + H(+). Its pathway is fermentation; pyruvate fermentation to lactate; (S)-lactate from pyruvate: step 1/1. With respect to regulation, allosterically activated by fructose 1,6-bisphosphate (FBP). In terms of biological role, catalyzes the conversion of lactate to pyruvate. The polypeptide is L-lactate dehydrogenase (Thermotoga sp. (strain RQ2)).